Reading from the N-terminus, the 468-residue chain is Glutamate--tRNA ligase (468 aa).

The 'HIGH' region motif lies at 11-21 (PSPTGFIHLGN). Residues 243 to 247 (KMSKR) carry the 'KMSKS' region motif. Residue K246 participates in ATP binding.

The protein belongs to the class-I aminoacyl-tRNA synthetase family. Glutamate--tRNA ligase type 1 subfamily. As to quaternary structure, monomer.

Its subcellular location is the cytoplasm. It catalyses the reaction tRNA(Glu) + L-glutamate + ATP = L-glutamyl-tRNA(Glu) + AMP + diphosphate. Catalyzes the attachment of glutamate to tRNA(Glu) in a two-step reaction: glutamate is first activated by ATP to form Glu-AMP and then transferred to the acceptor end of tRNA(Glu). This is Glutamate--tRNA ligase from Cupriavidus pinatubonensis (strain JMP 134 / LMG 1197) (Cupriavidus necator (strain JMP 134)).